Reading from the N-terminus, the 599-residue chain is ATP-dependent zinc metalloprotease FtsH 3 (599 aa).

Topologically, residues 1–7 (MKYKKKN) are cytoplasmic. The chain crosses the membrane as a helical span at residues 8-28 (ILFITTIIVIYLAFLFNWLEI). The Extracellular segment spans residues 29–128 (GIFKPKGESI…PFSWLLSIFS (100 aa)). Residues 129-149 (ILLNFINVLSSLVFTIYIFLA) traverse the membrane as a helical segment. Topologically, residues 150–599 (IHRESGKLNS…IEQLVVNTKK (450 aa)) are cytoplasmic. Residue 214 to 221 (GPPGTGKT) coordinates ATP. His436 serves as a coordination point for Zn(2+). Residue Glu437 is part of the active site. 2 residues coordinate Zn(2+): His440 and Asp512.

This sequence in the central section; belongs to the AAA ATPase family. It in the C-terminal section; belongs to the peptidase M41 family. In terms of assembly, homohexamer. Zn(2+) serves as cofactor.

The protein localises to the cell membrane. Its function is as follows. Acts as a processive, ATP-dependent zinc metallopeptidase for both cytoplasmic and membrane proteins. Plays a role in the quality control of integral membrane proteins. This is ATP-dependent zinc metalloprotease FtsH 3 from Phytoplasma mali (strain AT).